Here is a 152-residue protein sequence, read N- to C-terminus: Acidic phospholipase A2 (152 aa).

A signal peptide spans 1-21 (MNPAHLLVLSAVCVSLLGASS). Positions 22–27 (IPPQPL) are excised as a propeptide. Disulfide bonds link Cys38-Cys104, Cys54-Cys151, Cys56-Cys72, Cys71-Cys132, Cys78-Cys125, Cys88-Cys118, and Cys111-Cys123. Tyr55, Gly57, and Gly59 together coordinate Ca(2+). His75 is an active-site residue. Asp76 lines the Ca(2+) pocket. The active site involves Asp126.

The protein belongs to the phospholipase A2 family. Group I subfamily. D49 sub-subfamily. Ca(2+) serves as cofactor. In terms of tissue distribution, expressed by the venom gland.

The protein localises to the secreted. The catalysed reaction is a 1,2-diacyl-sn-glycero-3-phosphocholine + H2O = a 1-acyl-sn-glycero-3-phosphocholine + a fatty acid + H(+). In terms of biological role, PLA2 catalyzes the calcium-dependent hydrolysis of the 2-acyl groups in 3-sn-phosphoglycerides. In Ophiophagus hannah (King cobra), this protein is Acidic phospholipase A2.